Reading from the N-terminus, the 509-residue chain is Cytochrome P450 4A10 (509 aa).

2 helical membrane passes run 11 to 31 (FTGS…LLLL) and 121 to 141 (LLAP…WFQH). A heme-binding site is contributed by Glu320. A Phosphoserine modification is found at Ser439. Cys456 serves as a coordination point for heme.

Belongs to the cytochrome P450 family. Heme is required as a cofactor. In terms of tissue distribution, expressed in liver (at protein level) and kidney (at protein level).

It is found in the endoplasmic reticulum membrane. The protein localises to the microsome membrane. It carries out the reaction an omega-methyl-long-chain fatty acid + reduced [NADPH--hemoprotein reductase] + O2 = an omega-hydroxy-long-chain fatty acid + oxidized [NADPH--hemoprotein reductase] + H2O + H(+). It catalyses the reaction dodecanoate + reduced [NADPH--hemoprotein reductase] + O2 = 12-hydroxydodecanoate + oxidized [NADPH--hemoprotein reductase] + H2O + H(+). The enzyme catalyses dodecanoate + reduced [NADPH--hemoprotein reductase] + O2 = 11-hydroxydodecanoate + oxidized [NADPH--hemoprotein reductase] + H2O + H(+). The catalysed reaction is tetradecanoate + reduced [NADPH--hemoprotein reductase] + O2 = 14-hydroxytetradecanoate + oxidized [NADPH--hemoprotein reductase] + H2O + H(+). It carries out the reaction hexadecanoate + reduced [NADPH--hemoprotein reductase] + O2 = 16-hydroxyhexadecanoate + oxidized [NADPH--hemoprotein reductase] + H2O + H(+). It catalyses the reaction (9Z)-octadecenoate + reduced [NADPH--hemoprotein reductase] + O2 = 18-hydroxy-(9Z)-octadecenoate + oxidized [NADPH--hemoprotein reductase] + H2O + H(+). The enzyme catalyses (9Z,12Z)-octadecadienoate + reduced [NADPH--hemoprotein reductase] + O2 = 18-hydroxy-(9Z,12Z)-octadecadienoate + oxidized [NADPH--hemoprotein reductase] + H2O + H(+). The catalysed reaction is (9Z,12Z)-octadecadienoate + reduced [NADPH--hemoprotein reductase] + O2 = 17-hydroxy-(9Z,12Z)-octadecadienoate + oxidized [NADPH--hemoprotein reductase] + H2O + H(+). It carries out the reaction (5Z,8Z,11Z,14Z)-eicosatetraenoate + reduced [NADPH--hemoprotein reductase] + O2 = 20-hydroxy-(5Z,8Z,11Z,14Z)-eicosatetraenoate + oxidized [NADPH--hemoprotein reductase] + H2O + H(+). It catalyses the reaction 8,9-epoxy-(5Z,11Z,14Z)-eicosatrienoate + reduced [NADPH--hemoprotein reductase] + O2 = 20-hydroxy-8,9-epoxy-(5Z,11Z,14Z)-eicosatrienoate + oxidized [NADPH--hemoprotein reductase] + H2O + H(+). A cytochrome P450 monooxygenase involved in the metabolism of fatty acids. Catalyzes predominantly the oxidation of the terminal carbon (omega-oxidation) of long-chain fatty acids. Acts as a major omega-hydroxylase for dodecanoic (lauric) acid in liver. In kidney, may play an important role in omega-hydroxylation of (5Z,8Z,11Z,14Z)-eicosatetraenoic acid (arachidonate) to 20-hydroxyeicosatetraenoic acid (20-HETE), a signaling molecule acting both as vasoconstrictive and natriuretic with overall effect on arterial blood pressure. Also participates in the formation of anti-inflammatory hydroxyepoxyeicosatrienoic acids (HEETs) in kidney by converting 8,9-epoxyeicosatrienoic acid (EET) to 20,8,9-HEET, an activator of PPARA. Displays substantially lower fatty acid omega-1 hydroxylase activity. Mechanistically, uses molecular oxygen inserting one oxygen atom into a substrate, and reducing the second into a water molecule, with two electrons provided by NADPH via cytochrome P450 reductase (CPR; NADPH-ferrihemoprotein reductase). This chain is Cytochrome P450 4A10 (Cyp4a10), found in Rattus norvegicus (Rat).